The primary structure comprises 205 residues: Ribosomal RNA small subunit methyltransferase G (205 aa).

S-adenosyl-L-methionine-binding positions include glycine 76, leucine 81, 127–128 (IE), and arginine 140.

This sequence belongs to the methyltransferase superfamily. RNA methyltransferase RsmG family.

The protein resides in the cytoplasm. The enzyme catalyses guanosine(527) in 16S rRNA + S-adenosyl-L-methionine = N(7)-methylguanosine(527) in 16S rRNA + S-adenosyl-L-homocysteine. Specifically methylates the N7 position of guanine in position 527 of 16S rRNA. This is Ribosomal RNA small subunit methyltransferase G from Francisella tularensis subsp. novicida (strain U112).